A 130-amino-acid chain; its full sequence is Small ribosomal subunit protein uS8 (130 aa).

The protein belongs to the universal ribosomal protein uS8 family. Part of the 30S ribosomal subunit. Contacts proteins S5 and S12.

One of the primary rRNA binding proteins, it binds directly to 16S rRNA central domain where it helps coordinate assembly of the platform of the 30S subunit. This is Small ribosomal subunit protein uS8 from Buchnera aphidicola subsp. Cinara cedri (strain Cc).